The following is a 264-amino-acid chain: Undecaprenyl-diphosphatase (264 aa).

The next 6 helical transmembrane spans lie at Asn-41–Trp-61, Tyr-82–Asp-102, Ala-106–Leu-126, Ile-140–Leu-160, Ile-213–Cys-233, and Lys-244–Leu-264.

It belongs to the UppP family.

The protein resides in the cell inner membrane. It catalyses the reaction di-trans,octa-cis-undecaprenyl diphosphate + H2O = di-trans,octa-cis-undecaprenyl phosphate + phosphate + H(+). Catalyzes the dephosphorylation of undecaprenyl diphosphate (UPP). Confers resistance to bacitracin. In Bacteroides thetaiotaomicron (strain ATCC 29148 / DSM 2079 / JCM 5827 / CCUG 10774 / NCTC 10582 / VPI-5482 / E50), this protein is Undecaprenyl-diphosphatase.